We begin with the raw amino-acid sequence, 237 residues long: Ubiquinone/menaquinone biosynthesis C-methyltransferase UbiE (237 aa).

S-adenosyl-L-methionine-binding residues include Thr-60 and Asp-80.

It belongs to the class I-like SAM-binding methyltransferase superfamily. MenG/UbiE family.

The catalysed reaction is a 2-demethylmenaquinol + S-adenosyl-L-methionine = a menaquinol + S-adenosyl-L-homocysteine + H(+). It catalyses the reaction a 2-methoxy-6-(all-trans-polyprenyl)benzene-1,4-diol + S-adenosyl-L-methionine = a 5-methoxy-2-methyl-3-(all-trans-polyprenyl)benzene-1,4-diol + S-adenosyl-L-homocysteine + H(+). Its pathway is quinol/quinone metabolism; menaquinone biosynthesis; menaquinol from 1,4-dihydroxy-2-naphthoate: step 2/2. It participates in cofactor biosynthesis; ubiquinone biosynthesis. In terms of biological role, methyltransferase required for the conversion of demethylmenaquinol (DMKH2) to menaquinol (MKH2) and the conversion of 2-polyprenyl-6-methoxy-1,4-benzoquinol (DDMQH2) to 2-polyprenyl-3-methyl-6-methoxy-1,4-benzoquinol (DMQH2). The polypeptide is Ubiquinone/menaquinone biosynthesis C-methyltransferase UbiE (Syntrophotalea carbinolica (strain DSM 2380 / NBRC 103641 / GraBd1) (Pelobacter carbinolicus)).